A 92-amino-acid polypeptide reads, in one-letter code: MGFRLPGIRKTLSARNEASSKVLDAPKGYLAVYVGENMKRFVIPVSHLNQPLFQDLLSQAEEEFGYDHPMGGLTIPCSEDLFQHITSCLSAQ.

The protein belongs to the ARG7 family.

This is Indole-3-acetic acid-induced protein ARG7 (ARG7) from Vigna radiata var. radiata (Mung bean).